The primary structure comprises 582 residues: Pineapple eye protein (582 aa).

A C2HC pre-PHD-type zinc finger spans residues glutamate 6–leucine 44. The interval glutamate 6–arginine 119 is extended PHD domain (ePHD). Residues arginine 72 to arginine 119 form a PHD-type; atypical zinc finger. 2 disordered regions span residues proline 292 to phenylalanine 311 and arginine 323 to isoleucine 422. A compositionally biased stretch (polar residues) spans serine 340–proline 363. Residues serine 383–serine 399 show a composition bias toward basic and acidic residues.

Required for survival of imaginal disk cells possibly by regulation of cell apoptosis. Required for germline stem cell self-renewal through mediation of BMP signaling. The protein is Pineapple eye protein of Drosophila melanogaster (Fruit fly).